Here is a 209-residue protein sequence, read N- to C-terminus: Holliday junction branch migration complex subunit RuvA (209 aa).

The domain I stretch occupies residues 1-70 (MINYLKGKTT…EDQQILYGFS (70 aa)). The domain II stretch occupies residues 71–149 (TDSERDLFRQ…QWEQAIALKT (79 aa)). The interval 150-160 (PVSVGVPSREI) is flexible linker. Residues 160–209 (ILEEVEMTLLALGYTDEEIDQAISAISQDNLLLKNPHVEEWLKSAIAWLS) form a domain III region.

This sequence belongs to the RuvA family. As to quaternary structure, homotetramer. Forms an RuvA(8)-RuvB(12)-Holliday junction (HJ) complex. HJ DNA is sandwiched between 2 RuvA tetramers; dsDNA enters through RuvA and exits via RuvB. An RuvB hexamer assembles on each DNA strand where it exits the tetramer. Each RuvB hexamer is contacted by two RuvA subunits (via domain III) on 2 adjacent RuvB subunits; this complex drives branch migration. In the full resolvosome a probable DNA-RuvA(4)-RuvB(12)-RuvC(2) complex forms which resolves the HJ.

Its subcellular location is the cytoplasm. Its function is as follows. The RuvA-RuvB-RuvC complex processes Holliday junction (HJ) DNA during genetic recombination and DNA repair, while the RuvA-RuvB complex plays an important role in the rescue of blocked DNA replication forks via replication fork reversal (RFR). RuvA specifically binds to HJ cruciform DNA, conferring on it an open structure. The RuvB hexamer acts as an ATP-dependent pump, pulling dsDNA into and through the RuvAB complex. HJ branch migration allows RuvC to scan DNA until it finds its consensus sequence, where it cleaves and resolves the cruciform DNA. The chain is Holliday junction branch migration complex subunit RuvA from Gloeothece citriformis (strain PCC 7424) (Cyanothece sp. (strain PCC 7424)).